The sequence spans 311 residues: Methionyl-tRNA formyltransferase (311 aa).

Residue 112–115 participates in (6S)-5,6,7,8-tetrahydrofolate binding; it reads SLLP.

This sequence belongs to the Fmt family.

The enzyme catalyses L-methionyl-tRNA(fMet) + (6R)-10-formyltetrahydrofolate = N-formyl-L-methionyl-tRNA(fMet) + (6S)-5,6,7,8-tetrahydrofolate + H(+). Its function is as follows. Attaches a formyl group to the free amino group of methionyl-tRNA(fMet). The formyl group appears to play a dual role in the initiator identity of N-formylmethionyl-tRNA by promoting its recognition by IF2 and preventing the misappropriation of this tRNA by the elongation apparatus. The polypeptide is Methionyl-tRNA formyltransferase (Sinorhizobium fredii (strain NBRC 101917 / NGR234)).